The following is a 73-amino-acid chain: Large ribosomal subunit protein bL32c (73 aa).

The protein belongs to the bacterial ribosomal protein bL32 family.

Its subcellular location is the plastid. The protein localises to the chloroplast. The chain is Large ribosomal subunit protein bL32c from Jasminum nudiflorum (Winter jasmine).